Consider the following 147-residue polypeptide: 6,7-dimethyl-8-ribityllumazine synthase (147 aa).

5-amino-6-(D-ribitylamino)uracil-binding positions include Phe16, 48-50, and 73-75; these read TFD and AVI. (2S)-2-hydroxy-3-oxobutyl phosphate is bound at residue 78 to 79; that stretch reads DT. His81 functions as the Proton donor in the catalytic mechanism. Leu106 is a 5-amino-6-(D-ribitylamino)uracil binding site. Arg121 provides a ligand contact to (2S)-2-hydroxy-3-oxobutyl phosphate.

Belongs to the DMRL synthase family.

It carries out the reaction (2S)-2-hydroxy-3-oxobutyl phosphate + 5-amino-6-(D-ribitylamino)uracil = 6,7-dimethyl-8-(1-D-ribityl)lumazine + phosphate + 2 H2O + H(+). Its pathway is cofactor biosynthesis; riboflavin biosynthesis; riboflavin from 2-hydroxy-3-oxobutyl phosphate and 5-amino-6-(D-ribitylamino)uracil: step 1/2. Functionally, catalyzes the formation of 6,7-dimethyl-8-ribityllumazine by condensation of 5-amino-6-(D-ribitylamino)uracil with 3,4-dihydroxy-2-butanone 4-phosphate. This is the penultimate step in the biosynthesis of riboflavin. In Aeropyrum pernix (strain ATCC 700893 / DSM 11879 / JCM 9820 / NBRC 100138 / K1), this protein is 6,7-dimethyl-8-ribityllumazine synthase.